Reading from the N-terminus, the 497-residue chain is Glutamyl-tRNA(Gln) amidotransferase subunit A (497 aa).

Active-site charge relay system residues include lysine 91 and serine 166. The tract at residues 143–171 (SSTENSAYGPTHNPWDLERTAGGSGGGSS) is disordered. Serine 190 serves as the catalytic Acyl-ester intermediate.

This sequence belongs to the amidase family. GatA subfamily. Heterotrimer of A, B and C subunits.

It carries out the reaction L-glutamyl-tRNA(Gln) + L-glutamine + ATP + H2O = L-glutaminyl-tRNA(Gln) + L-glutamate + ADP + phosphate + H(+). Its function is as follows. Allows the formation of correctly charged Gln-tRNA(Gln) through the transamidation of misacylated Glu-tRNA(Gln) in organisms which lack glutaminyl-tRNA synthetase. The reaction takes place in the presence of glutamine and ATP through an activated gamma-phospho-Glu-tRNA(Gln). This is Glutamyl-tRNA(Gln) amidotransferase subunit A from Corynebacterium glutamicum (strain R).